Reading from the N-terminus, the 115-residue chain is uncharacterized protein (115 aa).

A run of 3 helical transmembrane segments spans residues 1–21 (MFLA…FGSW), 33–53 (ALAL…LAAG), and 54–74 (GVVA…VCIA).

The protein to M.leprae ML0030.

It localises to the cell membrane. This is an uncharacterized protein from Mycobacterium tuberculosis (strain CDC 1551 / Oshkosh).